The sequence spans 88 residues: Putative regulatory protein Ava_1474 (88 aa).

It belongs to the RemA family.

This is Putative regulatory protein Ava_1474 from Trichormus variabilis (strain ATCC 29413 / PCC 7937) (Anabaena variabilis).